The primary structure comprises 354 residues: G protein alpha o subunit (354 aa).

Glycine 2 is lipidated: N-myristoyl glycine. Cysteine 3 carries S-palmitoyl cysteine lipidation. Residues 32 to 354 (KDIKLLLLGA…ANNLRGCGLY (323 aa)) enclose the G-alpha domain. The G1 motif stretch occupies residues 35-48 (KLLLLGAGESGKST). GTP contacts are provided by residues 40–47 (GAGESGKS), 176–182 (LRTRVKT), 201–205 (DVGGQ), 270–273 (NKKD), and alanine 326. Serine 47 and threonine 182 together coordinate Mg(2+). A G2 motif region spans residues 174–182 (DILRTRVKT). Residues 197-206 (FKLFDVGGQR) are G3 motif. Residues 266-273 (ILFLNKKD) form a G4 motif region. The tract at residues 324–329 (TCATDT) is G5 motif.

It belongs to the G-alpha family. G(i/o/t/z) subfamily. In terms of assembly, g proteins are composed of 3 units; alpha, beta and gamma. The alpha chain contains the guanine nucleotide binding site. As to expression, expressed primarily in neuronal cell bodies in the brain, optic lobe, and thoracic and abdominal ganglia. Also expressed in antenna, oocytes and ovarian nurse cells.

Guanine nucleotide-binding proteins (G proteins) are involved as modulators or transducers in various transmembrane signaling systems. Plays a role in glial cell differentiation during embryogenesis; loco, Galphai and the G-protein coupled receptor, moody, are required in the surface glia to achieve effective insulation of the nerve cord. This Drosophila melanogaster (Fruit fly) protein is G protein alpha o subunit (Galphao).